We begin with the raw amino-acid sequence, 262 residues long: Phosphatidylglycerol--prolipoprotein diacylglyceryl transferase (262 aa).

4 helical membrane passes run 17 to 37 (LAIH…YALG), 57 to 77 (LIFY…VLFY), 95 to 115 (GGMS…LFAH), and 119 to 139 (LGFF…LAAG). Residue Arg140 participates in a 1,2-diacyl-sn-glycero-3-phospho-(1'-sn-glycerol) binding. A run of 3 helical transmembrane segments spans residues 173-193 (PSQL…LWWY), 200-220 (AGQV…LVEF), and 227-247 (FLGL…PMVL).

This sequence belongs to the Lgt family.

Its subcellular location is the cell inner membrane. The enzyme catalyses L-cysteinyl-[prolipoprotein] + a 1,2-diacyl-sn-glycero-3-phospho-(1'-sn-glycerol) = an S-1,2-diacyl-sn-glyceryl-L-cysteinyl-[prolipoprotein] + sn-glycerol 1-phosphate + H(+). The protein operates within protein modification; lipoprotein biosynthesis (diacylglyceryl transfer). Catalyzes the transfer of the diacylglyceryl group from phosphatidylglycerol to the sulfhydryl group of the N-terminal cysteine of a prolipoprotein, the first step in the formation of mature lipoproteins. In Bordetella parapertussis (strain 12822 / ATCC BAA-587 / NCTC 13253), this protein is Phosphatidylglycerol--prolipoprotein diacylglyceryl transferase.